Consider the following 516-residue polypeptide: GMP synthase [glutamine-hydrolyzing] (516 aa).

Residues 8–198 (KILILDFGSQ…VVNICGCDTL (191 aa)) enclose the Glutamine amidotransferase type-1 domain. The active-site Nucleophile is the C84. Residues H172 and E174 contribute to the active site. The region spanning 199–391 (WNIENIIEND…LGLPYNMLYR (193 aa)) is the GMPS ATP-PPase domain. ATP is bound at residue 226–232 (SGGVDSS).

As to quaternary structure, homodimer.

The catalysed reaction is XMP + L-glutamine + ATP + H2O = GMP + L-glutamate + AMP + diphosphate + 2 H(+). It participates in purine metabolism; GMP biosynthesis; GMP from XMP (L-Gln route): step 1/1. Functionally, catalyzes the synthesis of GMP from XMP. This chain is GMP synthase [glutamine-hydrolyzing], found in Francisella tularensis subsp. holarctica (strain FTNF002-00 / FTA).